Reading from the N-terminus, the 341-residue chain is Heat-inducible transcription repressor HrcA (341 aa).

The protein belongs to the HrcA family.

Its function is as follows. Negative regulator of class I heat shock genes (grpE-dnaK-dnaJ and groELS operons). Prevents heat-shock induction of these operons. The sequence is that of Heat-inducible transcription repressor HrcA from Leptothrix cholodnii (strain ATCC 51168 / LMG 8142 / SP-6) (Leptothrix discophora (strain SP-6)).